A 534-amino-acid polypeptide reads, in one-letter code: Probable RNA-binding protein 46 (534 aa).

RRM domains are found at residues 61 to 139 (CEVF…VSLD), 141 to 223 (CRLF…WASP), and 236 to 308 (KVLY…LAKP).

The protein resides in the cytoplasm. In terms of biological role, essential for male and female fertility, playing a crucial role in regulating germ cell development by ensuring the proper progression of meiosis prophase I. The polypeptide is Probable RNA-binding protein 46 (rbm46) (Xenopus tropicalis (Western clawed frog)).